Here is a 343-residue protein sequence, read N- to C-terminus: Mitochondrial distribution and morphology protein 34 (343 aa).

Residues 1–196 form the SMP-LTD domain; sequence MSFVFPSWST…LPGIIHRLSQ (196 aa). 2 disordered regions span residues 227–255 and 300–325; these read EVEE…IGPG and GAGT…KAKR. The segment covering 306 to 317 has biased composition (low complexity); sequence SGRASLASSSVG.

It belongs to the MDM34 family. Component of the ER-mitochondria encounter structure (ERMES) or MDM complex, composed of MMM1, MDM10, MDM12 and MDM34.

The protein resides in the mitochondrion outer membrane. Functionally, component of the ERMES/MDM complex, which serves as a molecular tether to connect the endoplasmic reticulum (ER) and mitochondria. Components of this complex are involved in the control of mitochondrial shape and protein biogenesis, and function in nonvesicular lipid trafficking between the ER and mitochondria. MDM34 is required for the interaction of the ER-resident membrane protein MMM1 and the outer mitochondrial membrane-resident beta-barrel protein MDM10. This is Mitochondrial distribution and morphology protein 34 from Cryptococcus neoformans var. neoformans serotype D (strain B-3501A) (Filobasidiella neoformans).